Here is a 262-residue protein sequence, read N- to C-terminus: Nurim (262 aa).

At 1-4 the chain is on the nuclear side; it reads MAPA. The helical transmembrane segment at 5 to 28 threads the bilayer; the sequence is LLLIPAALASFILAFGTGVEFVRF. Residues 29 to 58 are Perinuclear space-facing; it reads TSLRPLLGRISESGSPDARQGWLAALQDQS. A helical transmembrane segment spans residues 59–80; sequence ILVPLVWDLGLLLLFVGQHSLM. The Nuclear portion of the chain corresponds to 81 to 97; that stretch reads ATETVKEWMSRYFGVLQ. The helical transmembrane segment at 98 to 114 threads the bilayer; sequence RSLYVACTALALQLVMR. Residues 115–133 are Perinuclear space-facing; it reads YWEPVPRGPVLWETRTEPW. The helical transmembrane segment at 134-164 threads the bilayer; it reads ATWVPLLCFVLHVISWLLIFSILLVFDYAEL. At 165-191 the chain is on the nuclear side; the sequence is MGLKQVYYHVLGLGEPLALKSPRALRL. The chain crosses the membrane as a helical span at residues 192 to 210; it reads FSHLRHPVCVELLTVLWVV. The Perinuclear space segment spans residues 211-216; sequence PTLGTD. Residues 217–234 traverse the membrane as a helical segment; that stretch reads RLLLALLLTLYLGLAHGL. Topologically, residues 235–262 are nuclear; that stretch reads DQHDLRYLRAQLQRKLHLLSRPQDGEAE.

It belongs to the nurim family.

It is found in the nucleus inner membrane. This chain is Nurim (NRM), found in Bos taurus (Bovine).